Here is a 461-residue protein sequence, read N- to C-terminus: Phytase A (461 aa).

Cysteines 22 and 31 form a disulfide. The 1D-myo-inositol hexakisphosphate site is built by Gln41, Tyr42, Arg71, His72, Arg75, and Thr78. Intrachain disulfides connect Cys61-Cys405, Cys205-Cys456, Cys254-Cys272, and Cys427-Cys435. His72 serves as the catalytic Nucleophile. Asn95 and Asn110 each carry an N-linked (GlcNAc...) asparagine glycan. Arg155 serves as a coordination point for 1D-myo-inositol hexakisphosphate. An N-linked (GlcNAc...) asparagine glycan is attached at Asn197. 1D-myo-inositol hexakisphosphate is bound at residue Lys291. Asn329 and Asn343 each carry an N-linked (GlcNAc...) asparagine glycan. The 1D-myo-inositol hexakisphosphate site is built by His352 and Asp353. A glycan (N-linked (GlcNAc...) asparagine) is linked at Asn367.

Belongs to the histidine acid phosphatase family. In terms of assembly, monomer. Post-translationally, glycosylated.

It localises to the secreted. The catalysed reaction is 1D-myo-inositol hexakisphosphate + H2O = 1D-myo-inositol 1,2,4,5,6-pentakisphosphate + phosphate. It catalyses the reaction 1D-myo-inositol 1,2,4,5,6-pentakisphosphate + H2O = 1D-myo-inositol 1,2,5,6-tetrakisphosphate + phosphate. It carries out the reaction 1D-myo-inositol 1,2,5,6-tetrakisphosphate + H2O = 1D-myo-inositol 1,2,6-trisphosphate + phosphate. The enzyme catalyses 1D-myo-inositol 1,2,6-trisphosphate + H2O = 1D-myo-inositol 1,2-bisphosphate + phosphate. The catalysed reaction is 1D-myo-inositol 1,2-bisphosphate + H2O = 1D-myo-inositol 2-phosphate + phosphate. In terms of biological role, catalyzes the phosphate monoester hydrolysis of phytic acid (myo-inositol hexakisphosphate), which results in the stepwise formation of myo-inositol pentakis-, tetrakis-, tris-, bis-, and monophosphates, as well as the liberation of inorganic phosphate. Myo-inositol 2-monophosphate is the end product. The protein is Phytase A of Penicillium oxalicum.